Consider the following 536-residue polypeptide: L-ornithine N(5)-monooxygenase SIDA (536 aa).

The tract at residues 1-25 (MSPHRETTGDESTTTTVPQNGTNGA) is disordered. FAD-binding positions include 115–123 (EKQTRFAWH) and Gln-134. Position 139 (Lys-139) interacts with L-ornithine. Position 200 (Val-200) interacts with FAD. Arg-310 contacts NADP(+). L-ornithine is bound by residues 324 to 327 (NSIF) and Asn-354. Residue 515–517 (TLL) coordinates FAD. Position 518 (Ser-518) interacts with L-ornithine.

It belongs to the lysine N(6)-hydroxylase/L-ornithine N(5)-oxygenase family. Homotetramer. FAD serves as cofactor.

It catalyses the reaction L-ornithine + NADH + O2 = N(5)-hydroxy-L-ornithine + NAD(+) + H2O. The catalysed reaction is L-ornithine + NADPH + O2 = N(5)-hydroxy-L-ornithine + NADP(+) + H2O. It functions in the pathway siderophore biosynthesis. Its function is as follows. L-ornithine N(5)-monooxygenase; part of the gene cluster that mediates the biosynthesis of at least 11 siderophores, including beauverichelin A, dimerumic acid (DA), Na-dimethyl coprogen (NADC), eleutherazine B, ferricrocin (FC), fusarinine A, fusarinine C (FsC), metachelin A, mevalonolactone, rhodotorulic acid (RA) and tenellin. This cocktail of siderophores for iron metabolism is essential for virulence, and more specifically for the fungal virulence in penetrating through the host cuticle. Siderophore synthesis is also involved in conidial germination under iron-deficient conditions. SIDA initiates the biosynthesis of these siderophores with the enzymatic hydroxylation of ornithine. SIDA is indispensable for the production of most siderophores including fusarinine C and ferricrocin but not mevalonolactone and eleutherazine B. However, SIDA mediates the metabolic interplay between synthesis of mevalonolactone and eleutherazine B and other siderophores. The chain is L-ornithine N(5)-monooxygenase SIDA from Beauveria bassiana (strain ARSEF 2860) (White muscardine disease fungus).